Consider the following 226-residue polypeptide: Lysoplasmalogenase TMEM86B (226 aa).

Residues 1–23 lie on the Cytoplasmic side of the membrane; sequence MDPGKEGLPRKPRFSAQQLHVGK. Residues 24–40 traverse the membrane as a helical segment; the sequence is WLSPFFFTCAVYFLLWI. Residues 41–46 are Extracellular-facing; the sequence is PDDQPS. A helical membrane pass occupies residues 47-64; it reads WVGALVKCLPVLSLVVFL. Topologically, residues 65–76 are cytoplasmic; that stretch reads RAVDAGGGYSAR. The helical transmembrane segment at 77 to 93 threads the bilayer; the sequence is LQGALLCSAVGDACLVW. Topologically, residues 94–99 are extracellular; the sequence is PEAFLH. The chain crosses the membrane as a helical span at residues 100–117; it reads GVAAFAAAHLLYLWAFGL. At 118-123 the chain is on the cytoplasmic side; that stretch reads TPLQPG. The chain crosses the membrane as a helical span at residues 124 to 140; that stretch reads LLLLVILAALPYYGLLL. Over 141–146 the chain is Extracellular; the sequence is WHLPPD. A helical transmembrane segment spans residues 147–163; the sequence is LVLALTAYSLALATMLW. The Cytoplasmic segment spans residues 164-171; the sequence is RGLARGGS. The helical transmembrane segment at 172 to 188 threads the bilayer; it reads TGWGALLFTLSDTTLAW. The Extracellular segment spans residues 189–199; sequence NAFAQPLPHAR. Residues 200-217 traverse the membrane as a helical segment; sequence LVVMTTYYSAQVLISLSV. Over 218–226 the chain is Cytoplasmic; that stretch reads SQSPKLKPN.

This sequence belongs to the TMEM86 family. As to quaternary structure, homodimer.

Its subcellular location is the endoplasmic reticulum membrane. The protein resides in the cytoplasm. It carries out the reaction a 1-O-(1Z-alkenyl)-sn-glycero-3-phosphocholine + H2O = a 2,3-saturated aldehyde + sn-glycerol 3-phosphocholine. The enzyme catalyses a 1-O-(1Z-alkenyl)-sn-glycero-3-phosphoethanolamine + H2O = a 2,3-saturated aldehyde + sn-glycero-3-phosphoethanolamine. Its activity is regulated as follows. Competitively inhibited by lysophosphatidic acid. Catalyzes the hydrolysis of the vinyl ether bond of choline or ethanolamine lysoplasmalogens, forming fatty aldehyde and glycerophosphocholine or glycerophosphoethanolamine, respectively and is specific for the sn-2-deacylated (lyso) form of plasmalogen. The polypeptide is Lysoplasmalogenase TMEM86B (TMEM86B) (Sus scrofa (Pig)).